A 227-amino-acid chain; its full sequence is Phosphoribosylformylglycinamidine synthase subunit PurQ (227 aa).

One can recognise a Glutamine amidotransferase type-1 domain in the interval 3-225 (FAVIVFPGSN…LKQWRETYVV (223 aa)). C86 (nucleophile) is an active-site residue. Residues H194 and E196 contribute to the active site.

As to quaternary structure, part of the FGAM synthase complex composed of 1 PurL, 1 PurQ and 2 PurS subunits.

It is found in the cytoplasm. It catalyses the reaction N(2)-formyl-N(1)-(5-phospho-beta-D-ribosyl)glycinamide + L-glutamine + ATP + H2O = 2-formamido-N(1)-(5-O-phospho-beta-D-ribosyl)acetamidine + L-glutamate + ADP + phosphate + H(+). It carries out the reaction L-glutamine + H2O = L-glutamate + NH4(+). Its pathway is purine metabolism; IMP biosynthesis via de novo pathway; 5-amino-1-(5-phospho-D-ribosyl)imidazole from N(2)-formyl-N(1)-(5-phospho-D-ribosyl)glycinamide: step 1/2. Part of the phosphoribosylformylglycinamidine synthase complex involved in the purines biosynthetic pathway. Catalyzes the ATP-dependent conversion of formylglycinamide ribonucleotide (FGAR) and glutamine to yield formylglycinamidine ribonucleotide (FGAM) and glutamate. The FGAM synthase complex is composed of three subunits. PurQ produces an ammonia molecule by converting glutamine to glutamate. PurL transfers the ammonia molecule to FGAR to form FGAM in an ATP-dependent manner. PurS interacts with PurQ and PurL and is thought to assist in the transfer of the ammonia molecule from PurQ to PurL. The chain is Phosphoribosylformylglycinamidine synthase subunit PurQ from Bacillus cereus (strain B4264).